Reading from the N-terminus, the 125-residue chain is Putative glutaredoxin-C2 (125 aa).

The region spanning Ala-2–Trp-103 is the Glutaredoxin domain. Cys-22 and Cys-25 are disulfide-bonded.

It belongs to the glutaredoxin family. CC-type subfamily.

The protein localises to the cytoplasm. Its function is as follows. Has a glutathione-disulfide oxidoreductase activity in the presence of NADPH and glutathione reductase. Reduces low molecular weight disulfides and proteins. This chain is Putative glutaredoxin-C2 (GRXC2), found in Oryza sativa subsp. japonica (Rice).